The primary structure comprises 441 residues: Cysteine--tRNA ligase (441 aa).

Cys-24 serves as a coordination point for Zn(2+). A 'HIGH' region motif is present at residues 26 to 36; sequence PTVYNYIHIGN. Positions 204, 230, and 234 each coordinate Zn(2+). Residues 262 to 266 carry the 'KMSKS' region motif; the sequence is KMSKS. Lys-265 lines the ATP pocket.

The protein belongs to the class-I aminoacyl-tRNA synthetase family. As to quaternary structure, monomer. Zn(2+) serves as cofactor.

It is found in the cytoplasm. It catalyses the reaction tRNA(Cys) + L-cysteine + ATP = L-cysteinyl-tRNA(Cys) + AMP + diphosphate. In Mycoplasma mycoides subsp. mycoides SC (strain CCUG 32753 / NCTC 10114 / PG1), this protein is Cysteine--tRNA ligase.